We begin with the raw amino-acid sequence, 75 residues long: uncharacterized protein (75 aa).

A dksA C4-type zinc finger spans residues 43 to 67 (CSECGLPIPTTRLRANPFAHRCVSC).

This is an uncharacterized protein from Haemophilus influenzae (strain ATCC 51907 / DSM 11121 / KW20 / Rd).